Here is a 489-residue protein sequence, read N- to C-terminus: N-succinylglutamate 5-semialdehyde dehydrogenase (489 aa).

Residue 223–228 participates in NAD(+) binding; sequence GSSNTG. Active-site residues include glutamate 246 and cysteine 280.

It belongs to the aldehyde dehydrogenase family. AstD subfamily.

It carries out the reaction N-succinyl-L-glutamate 5-semialdehyde + NAD(+) + H2O = N-succinyl-L-glutamate + NADH + 2 H(+). It participates in amino-acid degradation; L-arginine degradation via AST pathway; L-glutamate and succinate from L-arginine: step 4/5. Functionally, catalyzes the NAD-dependent reduction of succinylglutamate semialdehyde into succinylglutamate. The polypeptide is N-succinylglutamate 5-semialdehyde dehydrogenase (Idiomarina loihiensis (strain ATCC BAA-735 / DSM 15497 / L2-TR)).